The following is a 316-amino-acid chain: Rhomboid-related protein 4 (316 aa).

Residues 1-21 are Cytoplasmic-facing; sequence MQRRTRGIDTGLLLLLSQVFH. Residues 22–42 form a helical membrane-spanning segment; the sequence is IGINNIPPVTLATLAVNVWFF. At 43–103 the chain is on the extracellular side; that stretch reads LNPWKPLYHS…KLEKRLGSRW (61 aa). A helical membrane pass occupies residues 104–124; the sequence is FAYIIATFSLLTGVVYLLLQF. Over 125–137 the chain is Cytoplasmic; it reads ASAELMNQPDFKR. The helical transmembrane segment at 138-154 threads the bilayer; sequence NCAVGFSGVLFALKVLS. Ser144 (nucleophile) is an active-site residue. Residues 155–182 are Extracellular-facing; sequence NHYCPGGFVNILGFPVPNRFACWAELAA. Residues 183-203 traverse the membrane as a helical segment; it reads IHFCTPGTSFAGHLAGILVGL. His195 is a catalytic residue. Over 204–316 the chain is Cytoplasmic; that stretch reads MYTQGPLKKI…RQRLHRFDGQ (113 aa). A ubiquitin-binding domain (UBD) region spans residues 269 to 284; the sequence is SEEEQLERALRASIWD. A VCP/p97-interacting motif (VIM) region spans residues 301-316; the sequence is PEEEMRRQRLHRFDGQ.

This sequence belongs to the peptidase S54 family. In terms of assembly, interacts with BIK and STEAP3. Interacts (via C-terminal domain) with VCP. Interacts with ubiquitin and ubiquitinated proteins. As to expression, expressed in intestine, lung, brain, kidney, epididymis and testis.

Its subcellular location is the endoplasmic reticulum membrane. The protein localises to the mitochondrion membrane. It catalyses the reaction Cleaves type-1 transmembrane domains using a catalytic dyad composed of serine and histidine that are contributed by different transmembrane domains.. Inhibited by aprotinin. Its function is as follows. Intramembrane-cleaving serine protease that cleaves single transmembrane or multi-pass membrane proteins in the hydrophobic plane of the membrane, luminal loops and juxtamembrane regions. Involved in regulated intramembrane proteolysis and the subsequent release of functional polypeptides from their membrane anchors. Functional component of endoplasmic reticulum-associated degradation (ERAD) for misfolded membrane proteins. Required for the degradation process of some specific misfolded endoplasmic reticulum (ER) luminal proteins. Participates in the transfer of misfolded proteins from the ER to the cytosol, where they are destroyed by the proteasome in a ubiquitin-dependent manner. Functions in BIK, MPZ, PKD1, PTCRA, RHO, STEAP3 and TRAC processing. Involved in the regulation of exosomal secretion; inhibits the TSAP6-mediated secretion pathway. Involved in the regulation of apoptosis; modulates BIK-mediated apoptotic activity. Also plays a role in the regulation of spermatogenesis; inhibits apoptotic activity in spermatogonia. In Rattus norvegicus (Rat), this protein is Rhomboid-related protein 4 (Rhbdd1).